The primary structure comprises 1668 residues: Zinc finger CCCH domain-containing protein 13 (1668 aa).

Disordered regions lie at residues 1 to 38 and 56 to 157; these read MSKI…GSTA and TCRF…GDIN. Positions 10-23 are enriched in polar residues; that stretch reads VENTKTISDSTSRR. The segment at 36–64 adopts a C3H1-type zinc-finger fold; it reads STAETQCRNWLKTGNCLYGNTCRFVHGPS. A phosphoserine mark is found at serine 64 and serine 77. A compositionally biased stretch (basic and acidic residues) spans 76-136; that stretch reads RSPERPTGDL…IKITKERTPE (61 aa). Residues lysine 179 and lysine 194 each participate in a glycyl lysine isopeptide (Lys-Gly) (interchain with G-Cter in SUMO2) cross-link. 2 disordered regions span residues 190–1112 and 1125–1466; these read EIII…TATA and AAAT…PISD. A phosphoserine mark is found at serine 198, serine 207, serine 209, and serine 211. Positions 204 to 213 are enriched in low complexity; the sequence is SKLSPSPSLR. Residues 214–224 show a composition bias toward basic residues; that stretch reads KSSKSPKRKSS. Threonine 237 carries the post-translational modification Phosphothreonine. Residues serine 238 and serine 242 each carry the phosphoserine modification. Residues 239–254 show a composition bias toward polar residues; that stretch reads AVSSPLLDQQRNSKTN. Threonine 263 is modified (phosphothreonine). Serine 265 carries the phosphoserine modification. Over residues 283–315 the composition is skewed to basic and acidic residues; that stretch reads KYKVKDRIEEKTRDGKDRGRDFERQREKRDKPR. Phosphoserine occurs at positions 316, 318, 325, and 328. Residues 323–346 are compositionally biased toward low complexity; it reads HHSPISSRHHSSSSQSGSSIQRHS. Phosphothreonine occurs at positions 354 and 364. Residues serine 370, serine 372, and serine 381 each carry the phosphoserine modification. A compositionally biased stretch (low complexity) spans 370-382; sequence SASPYPSHSLSSP. 2 stretches are compositionally biased toward basic and acidic residues: residues 394-434 and 442-575; these read PMRE…REER and SSRD…EKGS. Positions 584-593 are enriched in low complexity; sequence DSHSSNSNYH. Basic and acidic residues predominate over residues 594-640; that stretch reads DSWETRSSYPERDRYPERDNRDQARDSSFERRHGERDRRDNRERDQR. At serine 643 the chain carries Phosphoserine. Positions 645-789 form a coiled coil; it reads IRHQGRNDEL…RDKERERQRD (145 aa). A compositionally biased stretch (basic and acidic residues) spans 649 to 821; the sequence is GRNDELERDE…NPRDGHDERK (173 aa). A phosphoserine mark is found at serine 831, serine 833, serine 837, serine 845, serine 848, serine 853, serine 873, serine 875, and serine 877. Over residues 881 to 957 the composition is skewed to basic and acidic residues; sequence LTEDRQGRWK…TSDRAHDENK (77 aa). A Phosphothreonine modification is found at threonine 882. Position 943 is a phosphoserine (serine 943). Basic residues predominate over residues 958–969; that stretch reads KKAKIQKKPIKK. Over residues 970–981 the composition is skewed to basic and acidic residues; it reads KKEDDVGIERGN. Phosphoserine is present on residues serine 986, serine 993, serine 1010, serine 1014, and serine 1017. Residues 996 to 1010 are compositionally biased toward basic residues; it reads KGQKKKSIEKKRKKS. Threonine 1033 bears the Phosphothreonine mark. Positions 1073 to 1083 are enriched in basic and acidic residues; it reads PDRTEVTEAEH. 2 stretches are compositionally biased toward low complexity: residues 1084-1100 and 1125-1153; these read TATA…LSSL and AAAT…TFAN. Basic and acidic residues predominate over residues 1163-1188; it reads TRVEKVETPHVTIEDAQHRKPMDQKR. Threonine 1170 carries the post-translational modification Phosphothreonine. Phosphoserine is present on residues serine 1191, serine 1194, serine 1208, and serine 1210. The segment covering 1213-1223 has biased composition (basic and acidic residues); the sequence is SAHRSGDDQSG. Serine 1230 is subject to Phosphoserine. 2 stretches are compositionally biased toward basic and acidic residues: residues 1231–1286 and 1294–1379; these read GSRD…DRQV and DSRD…DRTF. Residues 1300-1366 are a coiled coil; the sequence is QERDRYEHDR…RERERLISDS (67 aa). Phosphoserine occurs at positions 1364, 1366, 1382, 1386, 1406, 1409, 1438, 1453, 1456, 1465, and 1466. Basic and acidic residues-rich tracts occupy residues 1386 to 1421 and 1429 to 1438; these read SVKR…DKDL and ETNKSERTES.

Belongs to the ZC3H13 family. In terms of assembly, component of the WMM complex, a N6-methyltransferase complex composed of a catalytic subcomplex, named MAC, and of an associated subcomplex, named MACOM. The MAC subcomplex is composed of METTL3 and METTL14. The MACOM subcomplex is composed of WTAP, ZC3H13, CBLL1/HAKAI, VIRMA, and, in some cases of RBM15 (RBM15 or RBM15B). Also a component of a MACOM-like complex, named WTAP complex, composed of WTAP, ZC3H13, CBLL1/HAKAI, VIRMA, RBM15, BCLAF1 and THRAP3.

The protein resides in the nucleus speckle. It is found in the nucleus. Its subcellular location is the nucleoplasm. Functionally, associated component of the WMM complex, a complex that mediates N6-methyladenosine (m6A) methylation of RNAs, a modification that plays a role in the efficiency of mRNA splicing and RNA processing. Acts as a key regulator of m6A methylation by promoting m6A methylation of mRNAs at the 3'-UTR. Controls embryonic stem cells (ESCs) pluripotency via its role in m6A methylation. In the WMM complex, anchors component of the MACOM subcomplex in the nucleus. Also required for bridging WTAP to the RNA-binding component RBM15 (RBM15 or RBM15B). This Homo sapiens (Human) protein is Zinc finger CCCH domain-containing protein 13.